The chain runs to 320 residues: Cytochrome f (320 aa).

The first 35 residues, 1–35 (MQTKNTFSWIKKEIIRSISVSLMIYIIARTSISNA), serve as a signal peptide directing secretion. Heme is bound by residues Tyr36, Cys56, Cys59, and His60. Residues 286–306 (VQGLLFFLASVILAQIFLVLK) traverse the membrane as a helical segment.

Belongs to the cytochrome f family. In terms of assembly, the 4 large subunits of the cytochrome b6-f complex are cytochrome b6, subunit IV (17 kDa polypeptide, petD), cytochrome f and the Rieske protein, while the 4 small subunits are PetG, PetL, PetM and PetN. The complex functions as a dimer. It depends on heme as a cofactor.

It is found in the plastid. Its subcellular location is the chloroplast thylakoid membrane. Its function is as follows. Component of the cytochrome b6-f complex, which mediates electron transfer between photosystem II (PSII) and photosystem I (PSI), cyclic electron flow around PSI, and state transitions. In Eucalyptus globulus subsp. globulus (Tasmanian blue gum), this protein is Cytochrome f.